The following is a 309-amino-acid chain: Probable ABC transporter permease protein y4oQ (309 aa).

7 helical membrane-spanning segments follow: residues 25-45, 89-109, 123-143, 174-194, 221-241, 246-266, and 278-298; these read VVWF…VPLV, LIYA…FAVL, LMLI…KLLY, VIIV…LAGL, LPHL…GVMA, IFLL…VYAY, and TTAI…PLIW. The ABC transmembrane type-1 domain occupies 85–296; it reads IRVTLIYAVV…VFVLAISAPL (212 aa).

The protein belongs to the binding-protein-dependent transport system permease family. MalFG subfamily.

The protein localises to the cell inner membrane. Its function is as follows. Probably part of the binding-protein-dependent transport system y4oPQRS. This system probably transports a sugar-like molecule. Probably responsible for the translocation of the substrate across the membrane. The chain is Probable ABC transporter permease protein y4oQ from Sinorhizobium fredii (strain NBRC 101917 / NGR234).